The primary structure comprises 546 residues: Light-independent protochlorophyllide reductase subunit B (546 aa).

Asp-36 provides a ligand contact to [4Fe-4S] cluster. Catalysis depends on Asp-287, which acts as the Proton donor. 422–423 provides a ligand contact to substrate; sequence GL. The tract at residues 443–501 is disordered; the sequence is PSHLSAHRPTGEAVGDAVGEPPAAPRDQAAPAATLDGSAAQSDPARTTPPGAPSWEDSA.

It belongs to the ChlB/BchB/BchZ family. As to quaternary structure, protochlorophyllide reductase is composed of three subunits; BchL, BchN and BchB. Forms a heterotetramer of two BchB and two BchN subunits. Requires [4Fe-4S] cluster as cofactor.

It carries out the reaction chlorophyllide a + oxidized 2[4Fe-4S]-[ferredoxin] + 2 ADP + 2 phosphate = protochlorophyllide a + reduced 2[4Fe-4S]-[ferredoxin] + 2 ATP + 2 H2O. The protein operates within porphyrin-containing compound metabolism; bacteriochlorophyll biosynthesis (light-independent). Component of the dark-operative protochlorophyllide reductase (DPOR) that uses Mg-ATP and reduced ferredoxin to reduce ring D of protochlorophyllide (Pchlide) to form chlorophyllide a (Chlide). This reaction is light-independent. The NB-protein (BchN-BchB) is the catalytic component of the complex. The polypeptide is Light-independent protochlorophyllide reductase subunit B (Rhodospirillum rubrum (strain ATCC 11170 / ATH 1.1.1 / DSM 467 / LMG 4362 / NCIMB 8255 / S1)).